We begin with the raw amino-acid sequence, 291 residues long: Glycine--tRNA ligase alpha subunit (291 aa).

Belongs to the class-II aminoacyl-tRNA synthetase family. Tetramer of two alpha and two beta subunits.

The protein resides in the cytoplasm. It catalyses the reaction tRNA(Gly) + glycine + ATP = glycyl-tRNA(Gly) + AMP + diphosphate. The sequence is that of Glycine--tRNA ligase alpha subunit from Microcystis aeruginosa (strain NIES-843 / IAM M-2473).